Consider the following 416-residue polypeptide: Advanced glycosylation end product-specific receptor (416 aa).

Positions 1–22 are cleaved as a signal peptide; sequence MAAGAVVGAWMLVLSLGGTVTG. Residues 23 to 115 form the Ig-like V-type domain; sequence DQNITARIGK…KETKSNYRVR (93 aa). At 23-352 the chain is on the extracellular side; that stretch reads DQNITARIGK…VEGPGLETLA (330 aa). N-linked (GlcNAc...) asparagine glycans are attached at residues Asn-25 and Asn-80. 2 cysteine pairs are disulfide-bonded: Cys-38–Cys-98 and Cys-143–Cys-207. Ig-like C2-type domains follow at residues 123–220 and 238–327; these read PEIV…RALH and PNVD…RAVS. The helical transmembrane segment at 353–373 threads the bilayer; it reads LTLGILGGLGTVALLIGVIVW. Residues 374–416 lie on the Cytoplasmic side of the membrane; the sequence is HRRRQRKGQERKVPENQEEEEEERAELNQPEEPEAAESSTGGP. A disordered region spans residues 377 to 416; that stretch reads RQRKGQERKVPENQEEEEEERAELNQPEEPEAAESSTGGP. The span at 389-408 shows a compositional bias: acidic residues; the sequence is NQEEEEEERAELNQPEEPEA.

In terms of assembly, constitutive homodimer; disulfide-linked. Forms homooligomers. Interacts with S100A1 and APP. Interacts with S100B, S100A12 and S100A14. Interacts with TIRAP. Interacts with HMGB1. Interacts with LGP2; this interaction plays an important role in AGER-mediated pro-inflammatory responses and cytokine release. Interacts with double-strand break repair protein MRE11 which is a core component of the MRN complex; the interaction enhances MRE11 endonuclease activity and promotes DNA repair. Interacts with the MCM2-7 complex via interaction with complex member MCM2; the interaction is increased following DNA replication stress and stabilizes the MCM2-7 complex at replication forks. In terms of processing, phosphorylated on its cytoplasmic domain by PKCzeta/PRKCZ upon ligand binding. Phosphorylated by ATM following DNA damage. Post-translationally, targeted by the ubiquitin E3 ligase subunit FBXO10 to mediate its ubiquitination and degradation. In terms of tissue distribution, endothelial cells.

The protein localises to the cell membrane. The protein resides in the cell projection. It localises to the phagocytic cup. It is found in the early endosome. Its subcellular location is the nucleus. In terms of biological role, cell surface pattern recognition receptor that senses endogenous stress signals with a broad ligand repertoire including advanced glycation end products, S100 proteins, high-mobility group box 1 protein/HMGB1, amyloid beta/APP oligomers, nucleic acids, histones, phospholipids and glycosaminoglycans. Advanced glycosylation end products are nonenzymatically glycosylated proteins which accumulate in vascular tissue in aging and at an accelerated rate in diabetes. These ligands accumulate at inflammatory sites during the pathogenesis of various diseases including diabetes, vascular complications, neurodegenerative disorders and cancers, and RAGE transduces their binding into pro-inflammatory responses. Upon ligand binding, uses TIRAP and MYD88 as adapters to transduce the signal ultimately leading to the induction of inflammatory cytokines IL6, IL8 and TNFalpha through activation of NF-kappa-B. Interaction with S100A12 on endothelium, mononuclear phagocytes, and lymphocytes triggers cellular activation, with generation of key pro-inflammatory mediators. Interaction with S100B after myocardial infarction may play a role in myocyte apoptosis by activating ERK1/2 and p53/TP53 signaling. Contributes to the translocation of amyloid-beta peptide (ABPP) across the cell membrane from the extracellular to the intracellular space in cortical neurons. ABPP-initiated RAGE signaling, especially stimulation of p38 mitogen-activated protein kinase (MAPK), has the capacity to drive a transport system delivering ABPP as a complex with RAGE to the intraneuronal space. Participates in endothelial albumin transcytosis together with HMGB1 through the RAGE/SRC/Caveolin-1 pathway, leading to endothelial hyperpermeability. Mediates the loading of HMGB1 in extracellular vesicles (EVs) that shuttle HMGB1 to hepatocytes by transferrin-mediated endocytosis and subsequently promote hepatocyte pyroptosis by activating the NLRP3 inflammasome. Binds to DNA and promotes extracellular hypomethylated DNA (CpG DNA) uptake by cells via the endosomal route to activate inflammatory responses. Mediates phagocytosis by non-professional phagocytes (NPP) and this is enhanced by binding to ligands including RNA, DNA, HMGB1 and histones. Promotes NPP-mediated phagocytosis of Saccharomyces cerevisiae spores by binding to RNA attached to the spore wall. Also promotes NPP-mediated phagocytosis of apoptotic cells. Following DNA damage, recruited to DNA double-strand break sites where it colocalizes with the MRN repair complex via interaction with double-strand break repair protein MRE11. Enhances the endonuclease activity of MRE11, promoting the end resection of damaged DNA. Promotes DNA damage repair in trophoblasts which enhances trophoblast invasion and contributes to placental development and maintenance. Protects cells from DNA replication stress by localizing to damaged replication forks where it stabilizes the MCM2-7 complex and promotes faithful progression of the replication fork. The sequence is that of Advanced glycosylation end product-specific receptor (AGER) from Bos taurus (Bovine).